Here is a 287-residue protein sequence, read N- to C-terminus: Pentatricopeptide repeat-containing protein At4g18975, chloroplastic (287 aa).

The N-terminal 34 residues, 1–34 (MALCNLNPTQGIFPLQGLSKSQEFICFSLLQSPR), are a transit peptide targeting the chloroplast. 2 PPR repeats span residues 165–199 (TMGT…HTRS) and 201–235 (PRRL…KVSP).

It belongs to the PPR family. P subfamily.

The protein localises to the plastid. It is found in the chloroplast. The protein is Pentatricopeptide repeat-containing protein At4g18975, chloroplastic of Arabidopsis thaliana (Mouse-ear cress).